We begin with the raw amino-acid sequence, 209 residues long: MARYTGPICRLCRREGMKLYLKGERCFTEHCAFDKRPYAPGDHGRQRGKLSQYGTQLRAKQVMRVIYGIPERQFEHYFEKALGMSGDTRENLVRLVESRVDNIVYRLGFAISRRQARQLVTHGHFSVNGVKIDIPSYKLRPGDIVEVREKSRSLAAIKHAVESSKDRTQVPWVEVDFDSYRGTFLRLPNLEEVTDLPVDVQAIVEFYSR.

Positions 98 to 158 (SRVDNIVYRL…EKSRSLAAIK (61 aa)) constitute an S4 RNA-binding domain.

This sequence belongs to the universal ribosomal protein uS4 family. Part of the 30S ribosomal subunit. Contacts protein S5. The interaction surface between S4 and S5 is involved in control of translational fidelity.

In terms of biological role, one of the primary rRNA binding proteins, it binds directly to 16S rRNA where it nucleates assembly of the body of the 30S subunit. Its function is as follows. With S5 and S12 plays an important role in translational accuracy. The polypeptide is Small ribosomal subunit protein uS4 (Pseudothermotoga lettingae (strain ATCC BAA-301 / DSM 14385 / NBRC 107922 / TMO) (Thermotoga lettingae)).